Consider the following 1953-residue polypeptide: TATA-binding protein-associated factor mot1 (1953 aa).

The stretch at 36-74 (PDELYNLLGRVVPYLKSKNWDTRVAAAKAIGGIVENVPV) is one HEAT 1 repeat. Positions 79–141 (RTSPVKKEET…KLEEERLSTR (63 aa)) are disordered. Positions 98-108 (TEEKPFIKTEE) are enriched in basic and acidic residues. A compositionally biased stretch (low complexity) spans 113 to 130 (SSQSQVVVSSNLTSNSEV). A compositionally biased stretch (basic and acidic residues) spans 131–141 (SKLEEERLSTR). A Phosphoserine modification is found at Ser144. Residues 240–278 (DNVGSNSKGSPTTSIPEHKTSINNNKPEDTPTPSENVHL) form a disordered region. Over residues 242–276 (VGSNSKGSPTTSIPEHKTSINNNKPEDTPTPSENV) the composition is skewed to polar residues. 4 HEAT repeats span residues 358-396 (VWPF…YAGF), 513-551 (SDYL…KLVQ), 554-592 (LSSC…LCSF), and 608-646 (EFSF…VQTS). 2 disordered regions span residues 730–762 (SGQP…KDDP) and 1078–1103 (DDND…KSSL). HEAT repeat units follow at residues 1191-1229 (QSEI…SNAA) and 1270-1311 (VRIL…LVPL). One can recognise a Helicase ATP-binding domain in the interval 1370-1543 (AFLNKYELHG…WSLFDFLMPG (174 aa)). ATP is bound at residue 1383–1390 (DDMGLGKT). The DEGH box signature appears at 1494–1497 (DEGH). The HEAT 8 repeat unit spans residues 1580–1623 (EAIHKQVLPFMLRRLKEDVLADLPPKIIQDYYCDMSDLQRKLLN). In terms of domain architecture, Helicase C-terminal spans 1725–1877 (GIDSALTNAV…STVVNQQNAG (153 aa)). The segment at 1901 to 1920 (QNIDKEESEDAAGRGLSGTS) is disordered.

The protein belongs to the SNF2/RAD54 helicase family. As to quaternary structure, forms a complex with TBP which binds TATA DNA.

The protein resides in the nucleus. Regulates transcription in association with TATA binding protein (TBP). Removes TBP from the TATA box via its ATPase activity. The chain is TATA-binding protein-associated factor mot1 from Schizosaccharomyces pombe (strain 972 / ATCC 24843) (Fission yeast).